Reading from the N-terminus, the 259-residue chain is Chloroplastic import inner membrane translocase subunit HP30-2 (259 aa).

The next 4 helical transmembrane spans lie at alanine 55–leucine 75, asparagine 108–lysine 124, alanine 135–glycine 155, and methionine 158–glycine 178.

The protein belongs to the Tim17/Tim22/Tim23 family. In terms of assembly, probable component of a protein-conducting channel made of HP30-1, HP30-2 and HP20 that mediates the import of transit sequence-less proteins into the chloroplastic inner membrane. Interacts with CEQORH.

The protein localises to the mitochondrion membrane. It is found in the plastid. Its subcellular location is the chloroplast inner membrane. In terms of biological role, together with HP30-1 and HP20, triggers the import and insertion of transit sequence-less multi-pass transmembrane proteins (e.g. CEQORH) into the chloroplastic inner membrane. This chain is Chloroplastic import inner membrane translocase subunit HP30-2, found in Arabidopsis thaliana (Mouse-ear cress).